The primary structure comprises 411 residues: Receptor GIN3 (411 aa).

Over 1-99 (MSGFVAGEEA…LLPILPHPRN (99 aa)) the chain is Extracellular. Residues 100-120 (IPIIVPLFCVFTVMTSLAVGL) traverse the membrane as a helical segment. At 121–134 (RLWSRQKVAGGIRS) the chain is on the cytoplasmic side. Residues 135–155 (FDWLALAGFGLTIIYGAVSVY) traverse the membrane as a helical segment. The Extracellular segment spans residues 156–181 (HSKVSGPYQAFYDRTWDQMKENYKVY). A helical transmembrane segment spans residues 182–202 (LVLTIMYPFIMGLIKISLLLF). Residues 203–227 (YYRVATLNYVQWAVYATGSLTIANS) are Cytoplasmic-facing. A helical transmembrane segment spans residues 228-248 (IAAIITHCLAFMPIDFWNHFL). At 249 to 262 (QSPFKFNSRTPMLV) the chain is on the extracellular side. Residues 263–283 (FGAVYILTDVAILIIPMPMVF) traverse the membrane as a helical segment. At 284 to 292 (QLKLYPREK) the chain is on the cytoplasmic side. The helical transmembrane segment at 293-313 (VIAVIAFSLGGVACVASGFRI) threads the bilayer. Residues 314–328 (WAIDEFQNYSGKNSS) are Extracellular-facing. Residues Asn321 and Asn326 are each glycosylated (N-linked (GlcNAc...) asparagine). A helical transmembrane segment spans residues 329–349 (GLMIDAWTMIELNLTLICASA). At 350 to 411 (PAIRALAIHY…QSPVIPKEVV (62 aa)) the chain is on the cytoplasmic side. Residues 371-411 (FSSSGATRGSKSAGSSGKSKTPESEKSMQVSQSPVIPKEVV) are disordered. Over residues 372 to 389 (SSSGATRGSKSAGSSGKS) the composition is skewed to low complexity.

This sequence belongs to the SAT4 family. Interacts with guanine nucleotide-binding protein alpha GPA2; to activate adenylate cyclase and positively regulate nematode trap formation.

Its subcellular location is the cell membrane. Receptor that senses nematode-derived signals at the cell surface and signals via adenylate cyclase to positively regulate trap formation for nematode capture. This chain is Receptor GIN3, found in Arthrobotrys oligospora (strain ATCC 24927 / CBS 115.81 / DSM 1491) (Nematode-trapping fungus).